A 238-amino-acid polypeptide reads, in one-letter code: Probable transcriptional regulatory protein SAB0618 (238 aa).

Belongs to the TACO1 family. YeeN subfamily.

It is found in the cytoplasm. The chain is Probable transcriptional regulatory protein SAB0618 from Staphylococcus aureus (strain bovine RF122 / ET3-1).